The primary structure comprises 759 residues: Pseudocleavage protein nop-1 (759 aa).

5 disordered regions span residues 1-46, 334-361, 379-413, 440-495, and 732-759; these read MSAP…SSIF, KIFP…MDKK, LSVN…NLSQ, QSSR…KKER, and ESDG…GAKI. Over residues 10 to 42 the composition is skewed to basic and acidic residues; it reads DIHSDDRDHADHQTKKEKHWFEEKSEQNGENRR. Residues 448-465 show a composition bias toward low complexity; it reads TGNSSISSGVGSIASGTS. The span at 473–482 shows a compositional bias: polar residues; sequence GSRSGQSISR. Over residues 485–495 the composition is skewed to basic and acidic residues; the sequence is SRRDDEGKKER. Residues 736–759 are compositionally biased toward polar residues; it reads PASSNDDFDTQSTASTSTVFGAKI.

Its subcellular location is the nucleus. The protein resides in the cytoplasm. It is found in the cell cortex. It localises to the cleavage furrow. In terms of biological role, required for formation of the pseudocleavage furrow during the first cleavage of the embryo and also mediates aster-induced furrowing during cytokinesis. Promotes cortical recruitment of ani-1 and nmy-2 during pseudocleavage and cytokinesis and promotes the accumulation of actin at furrowing regions. Regulates establishment of embryonic cell polarity. The protein is Pseudocleavage protein nop-1 (nop-1) of Caenorhabditis elegans.